We begin with the raw amino-acid sequence, 98 residues long: Large ribosomal subunit protein uL23c (98 aa).

This sequence belongs to the universal ribosomal protein uL23 family. Part of the 50S ribosomal subunit.

It localises to the plastid. Functionally, binds to 23S rRNA. The sequence is that of Large ribosomal subunit protein uL23c (rpl23) from Euglena longa (Euglenophycean alga).